We begin with the raw amino-acid sequence, 510 residues long: 2,3-bisphosphoglycerate-independent phosphoglycerate mutase (510 aa).

Residues D14 and S64 each coordinate Mn(2+). Residue S64 is the Phosphoserine intermediate of the active site. Residues H125, R155 to D156, R187, R193, R259 to R262, and K332 contribute to the substrate site. D399, H403, D440, H441, and H459 together coordinate Mn(2+).

This sequence belongs to the BPG-independent phosphoglycerate mutase family. In terms of assembly, monomer. The cofactor is Mn(2+).

The catalysed reaction is (2R)-2-phosphoglycerate = (2R)-3-phosphoglycerate. Its pathway is carbohydrate degradation; glycolysis; pyruvate from D-glyceraldehyde 3-phosphate: step 3/5. Functionally, catalyzes the interconversion of 2-phosphoglycerate and 3-phosphoglycerate. Essential for the growth and pathogenicity on the host plant. The protein is 2,3-bisphosphoglycerate-independent phosphoglycerate mutase of Pseudomonas syringae pv. tomato (strain ATCC BAA-871 / DC3000).